Reading from the N-terminus, the 157-residue chain is Phosphopantetheine adenylyltransferase (157 aa).

Residue Ser-8 participates in substrate binding. Residues 8–9 and His-16 each bind ATP; that span reads SF. Substrate-binding residues include Lys-40, Leu-72, and Arg-86. Residues 87–89, Glu-97, and 121–127 each bind ATP; these read GLR and FGTISSS.

The protein belongs to the bacterial CoaD family. Homohexamer. Mg(2+) serves as cofactor.

The protein localises to the cytoplasm. It carries out the reaction (R)-4'-phosphopantetheine + ATP + H(+) = 3'-dephospho-CoA + diphosphate. It functions in the pathway cofactor biosynthesis; coenzyme A biosynthesis; CoA from (R)-pantothenate: step 4/5. Reversibly transfers an adenylyl group from ATP to 4'-phosphopantetheine, yielding dephospho-CoA (dPCoA) and pyrophosphate. The sequence is that of Phosphopantetheine adenylyltransferase from Cutibacterium acnes (strain DSM 16379 / KPA171202) (Propionibacterium acnes).